Consider the following 306-residue polypeptide: Olfactory receptor 8G17 (306 aa).

Residues 1-28 (MEKGNQSTVNKFFLSGLTEQPELQLPLF) lie on the Extracellular side of the membrane. The N-linked (GlcNAc...) asparagine glycan is linked to asparagine 5. Residues 29-49 (LLFLGIYLLTVLGNLGMIILI) traverse the membrane as a helical segment. At 50 to 56 (LLSSYLH) the chain is on the cytoplasmic side. A helical membrane pass occupies residues 57–77 (TPMYFFLSSLSFIDFCQSTVI). Over 78-97 (TPKMLVKFVREKNEISYPEC) the chain is Extracellular. A helical transmembrane segment spans residues 98–118 (ITQLCFFVIFAVSESYMLAAM). Residues 119–143 (AYDRYVAICSPLLYSSIMSQHKCLS) are Cytoplasmic-facing. A helical transmembrane segment spans residues 144–164 (LVLGVYILGIVCASAHVGCIF). The Extracellular segment spans residues 165 to 196 (RIDFCKSDLINHYFCDLISILNLSCSNIFVND). Residues 197–217 (LVILIFSLINTIFPTLTILSS) form a helical membrane-spanning segment. Topologically, residues 218–236 (YAFIIISILRIKSTEGRSK) are cytoplasmic. A helical membrane pass occupies residues 237 to 257 (AFSTCSSHISAVAIFYISAGF). At 258–271 (TYLNPSSSHSMDEG) the chain is on the extracellular side. A helical membrane pass occupies residues 272 to 292 (KVSSIFYTIIVPMLNPLIYSL). Residues 293-306 (RNKDVKIALKKMIE) lie on the Cytoplasmic side of the membrane.

Belongs to the G-protein coupled receptor 1 family.

Its subcellular location is the cell membrane. Odorant receptor. The polypeptide is Olfactory receptor 8G17 (Mus musculus (Mouse)).